Reading from the N-terminus, the 161-residue chain is Ribonuclease P protein component (161 aa).

Belongs to the RnpA family. As to quaternary structure, consists of a catalytic RNA component (M1 or rnpB) and a protein subunit.

It catalyses the reaction Endonucleolytic cleavage of RNA, removing 5'-extranucleotides from tRNA precursor.. In terms of biological role, RNaseP catalyzes the removal of the 5'-leader sequence from pre-tRNA to produce the mature 5'-terminus. It can also cleave other RNA substrates such as 4.5S RNA. The protein component plays an auxiliary but essential role in vivo by binding to the 5'-leader sequence and broadening the substrate specificity of the ribozyme. The sequence is that of Ribonuclease P protein component from Helicobacter pylori (strain Shi470).